Reading from the N-terminus, the 939-residue chain is Translation initiation factor IF-2 (939 aa).

Disordered regions lie at residues 51–81 (LGTKESGQDTGQATNEAAAAHRPTTVIGGKK) and 137–353 (VTNK…EMKA). The span at 181-210 (NEKKAGAPEIKRAEHTETVEKSKTAVDSKK) shows a compositional bias: basic and acidic residues. Residues 259–277 (PVNRSPRPSTPSPNRSAGG) are compositionally biased toward low complexity. Basic and acidic residues predominate over residues 300-312 (RRDEKPAERDSRP). The tr-type G domain maps to 437 to 606 (GRCPVVTVMG…QLAAEMLELK (170 aa)). Residues 446–453 (GHVDHGKT) are G1. Residue 446-453 (GHVDHGKT) participates in GTP binding. The G2 stretch occupies residues 471 to 475 (GITQH). The segment at 492–495 (DTPG) is G3. Residues 492–496 (DTPGH) and 546–549 (NKID) each bind GTP. The segment at 546 to 549 (NKID) is G4. The segment at 582-584 (SAK) is G5.

It belongs to the TRAFAC class translation factor GTPase superfamily. Classic translation factor GTPase family. IF-2 subfamily.

It localises to the cytoplasm. One of the essential components for the initiation of protein synthesis. Protects formylmethionyl-tRNA from spontaneous hydrolysis and promotes its binding to the 30S ribosomal subunits. Also involved in the hydrolysis of GTP during the formation of the 70S ribosomal complex. The protein is Translation initiation factor IF-2 of Desulfotalea psychrophila (strain LSv54 / DSM 12343).